The primary structure comprises 271 residues: Small ribosomal subunit protein uS2 (271 aa).

A disordered region spans residues 223-271 (RALAGSEEGEATEEVTPASEAEKQEVLAEAMSEEGDALQESEVVEEEEK). Positions 253 to 271 (MSEEGDALQESEVVEEEEK) are enriched in acidic residues.

It belongs to the universal ribosomal protein uS2 family.

The protein is Small ribosomal subunit protein uS2 of Wolinella succinogenes (strain ATCC 29543 / DSM 1740 / CCUG 13145 / JCM 31913 / LMG 7466 / NCTC 11488 / FDC 602W) (Vibrio succinogenes).